An 82-amino-acid chain; its full sequence is Small ribosomal subunit protein bS18 (82 aa).

Belongs to the bacterial ribosomal protein bS18 family. As to quaternary structure, part of the 30S ribosomal subunit. Forms a tight heterodimer with protein bS6.

Its function is as follows. Binds as a heterodimer with protein bS6 to the central domain of the 16S rRNA, where it helps stabilize the platform of the 30S subunit. In Bifidobacterium adolescentis (strain ATCC 15703 / DSM 20083 / NCTC 11814 / E194a), this protein is Small ribosomal subunit protein bS18.